A 351-amino-acid polypeptide reads, in one-letter code: Photosystem II D2 protein (351 aa).

The chain crosses the membrane as a helical span at residues 39-59; that stretch reads TAYLAIGGWLTGTTFVTSWYT. H116 is a binding site for chlorophyll a. The chain crosses the membrane as a helical span at residues 123–139; it reads GFMLRQFELARLIGIRP. Pheophytin a contacts are provided by Q128 and N141. The helical transmembrane segment at 151 to 164 threads the bilayer; the sequence is VFVSVFLIYPLGQS. H196 is a binding site for chlorophyll a. Residues 206-226 form a helical membrane-spanning segment; it reads GALLSAIHGVTVENTLYQDGE. H213 and F260 together coordinate a plastoquinone. A Fe cation-binding site is contributed by H213. H267 lines the Fe cation pocket. Residues 277–293 form a helical membrane-spanning segment; sequence GLWTSSIGIIGLALNLR.

Belongs to the reaction center PufL/M/PsbA/D family. In terms of assembly, PSII is composed of 1 copy each of membrane proteins PsbA, PsbB, PsbC, PsbD, PsbE, PsbF, PsbH, PsbI, PsbJ, PsbK, PsbL, PsbM, PsbT, PsbX, PsbY, PsbZ, Psb30/Ycf12, peripheral proteins PsbO, CyanoQ (PsbQ), PsbU, PsbV and a large number of cofactors. It forms dimeric complexes. Requires The D1/D2 heterodimer binds P680, chlorophylls that are the primary electron donor of PSII, and subsequent electron acceptors. It shares a non-heme iron and each subunit binds pheophytin, quinone, additional chlorophylls, carotenoids and lipids. There is also a Cl(-1) ion associated with D1 and D2, which is required for oxygen evolution. The PSII complex binds additional chlorophylls, carotenoids and specific lipids. as cofactor.

It is found in the host cellular thylakoid membrane. It catalyses the reaction 2 a plastoquinone + 4 hnu + 2 H2O = 2 a plastoquinol + O2. Its function is as follows. Photosystem II (PSII) is a light-driven water:plastoquinone oxidoreductase that uses light energy to abstract electrons from H(2)O, generating O(2) and a proton gradient subsequently used for ATP formation. It consists of a core antenna complex that captures photons, and an electron transfer chain that converts photonic excitation into a charge separation. The D1/D2 (PsbA/PsbD) reaction center heterodimer binds P680, the primary electron donor of PSII as well as several subsequent electron acceptors. D2 is needed for assembly of a stable PSII complex. The protein is Photosystem II D2 protein (psbD) of Synechococcus phage S-RSM2.